Here is an 89-residue protein sequence, read N- to C-terminus: DNA/RNA-binding protein Alba 1 (89 aa).

It belongs to the histone-like Alba family.

It is found in the cytoplasm. The protein resides in the chromosome. Functionally, binds double-stranded DNA tightly but without sequence specificity. Involved in DNA compaction. The sequence is that of DNA/RNA-binding protein Alba 1 from Archaeoglobus fulgidus (strain ATCC 49558 / DSM 4304 / JCM 9628 / NBRC 100126 / VC-16).